Consider the following 1252-residue polypeptide: MGAKRVTVRGARTSPIHRMSSLTPLLLMGMLTSGLAESPVPTSAPRGFWALSENLTAVEGTTVKLWCGVRAPGSVVQWAKDGLLLGPNPKMPGFPRYSLEGDRAKGEFHLLIEACDLSDDAEYECQVGRSELGPELVSPKVILSILVSPKVLLLTPEAGSTVTWVAGQEYVVTCVSGDAKPAPDITFIQSGRTILDVSSNVNEGSEEKLCITEAEARVIPQSSDNGQLLVCEGSNPALDTPIKASFTMNILFPPGPPVIDWPGLNEGHVRAGENLELPCTARGGNPPATLQWLKNGKPVSTAWGTEHAQAVAHSVLVMTVRPEDHGARLSCQSYNSVSAGTQERSITLQVTFPPSAITILGSVSQSENKNVTLCCLTKSSRPRVLLRWWLGGRQLLPTDETVMDGLHGGHISMSNLTFLVRREDNGLPLTCEAFSDAFSKETFKKSLTLNVKYPAQKLWIEGPPEGQYIRTGTRVRLVCLAIGGNPDPSLIWFKDSRPVSEPRQPQEPRRVQLGSVEKSGSTFSRELVLIIGPPDNRAKFSCKAGQLSASTQLVVQFPPTNLTILANSSALRPGDALNLTCVSISSNPPVNLSWDKEGERLEDVAAKPQSAPFKGSAASRSVFLRVSSRDHGQRVTCRAHSEALRETVSSFYRFNVLYPPEFLGEQVRAVTVVEQGQVLLPVSVSANPAPEAFNWTFRGYRLSPAGGPRHRILSGGALQLWNVTRADDGFYQLHCQNSEGTAEALLKLDVHYAPTIRALRDPTEVNVGGSVDIVCTVDANPILPEMFSWERLGEEEEDLNLDDMEKVSKGSTGRLRIRQAKLSQAGAYQCIVDNGVAPAARGLVRLVVRFAPQVDQPTPLTKVAAAGDSTSSATLHCRARGVPNIDFTWTKNGVPLDLQDPRYTEHRYHQGVVHSSLLTIANVSAAQDYALFKCTATNALGSDHTNIQLVSISRPDPPLGLKVVSISPHSVGLEWKPGFDGGLPQRFQIRYEALETPGFLHVDVLPTQATTFTLTGLKPSTRYRIWLLASNALGDSGLTDKGIQVSVTTPGPDQAPEDTDHQLPTELPPGPPRLPLLPVLFAVGGLLLLSNASCVGGLLWRRRLRRLAEEISEKTEAGSEDRIRNEYEESQWTGDRDTRSSTVSTAEVDPNYYSMRDFSPQLPPTLEEVLYHQGAEGEDMAFPGHLHDEVERAYGPPGAWGPLYDEVRMDPYDLRWPEVQCEDPRGIYDQVAADMDAVEASSLPFELRGHLV.

A signal peptide spans 1–35 (MGAKRVTVRGARTSPIHRMSSLTPLLLMGMLTSGL). The Extracellular segment spans residues 36-1078 (AESPVPTSAP…PGPPRLPLLP (1043 aa)). Ig-like C2-type domains are found at residues 39–144 (PVPT…VILS), 149–247 (PKVL…ASFT), 256–347 (PPVI…RSIT), 354–448 (PSAI…KSLT), 454–554 (PAQK…TQLV), and 558–649 (PPTN…ETVS). An N-linked (GlcNAc...) asparagine glycan is attached at asparagine 54. 3 cysteine pairs are disulfide-bonded: cysteine 67–cysteine 125, cysteine 174–cysteine 231, and cysteine 279–cysteine 331. Residue asparagine 370 is glycosylated (N-linked (GlcNAc...) asparagine). A disulfide bridge links cysteine 375 with cysteine 431. Position 446 is a phosphoserine (serine 446). A disulfide bridge links cysteine 479 with cysteine 542. Asparagine 561, asparagine 578, asparagine 591, and asparagine 722 each carry an N-linked (GlcNAc...) asparagine glycan. Cysteines 581 and 637 form a disulfide. 2 Ig-like C2-type domains span residues 754–846 (PTIR…LVRL) and 852–953 (PQVD…VSIS). 2 disulfides stabilise this stretch: cysteine 775–cysteine 830 and cysteine 877–cysteine 934. Residues 957–1052 (PPLGLKVVSI…IQVSVTTPGP (96 aa)) form the Fibronectin type-III domain. The tract at residues 1043–1067 (IQVSVTTPGPDQAPEDTDHQLPTEL) is disordered. The chain crosses the membrane as a helical span at residues 1079–1099 (VLFAVGGLLLLSNASCVGGLL). At 1100–1252 (WRRRLRRLAE…LPFELRGHLV (153 aa)) the chain is on the cytoplasmic side. Serine 1112 bears the Phosphoserine mark. The segment covering 1113–1127 (EKTEAGSEDRIRNEY) has biased composition (basic and acidic residues). A disordered region spans residues 1113–1144 (EKTEAGSEDRIRNEYEESQWTGDRDTRSSTVS). Position 1115 is a phosphothreonine (threonine 1115). At serine 1119 the chain carries Phosphoserine. The residue at position 1204 (tyrosine 1204) is a Phosphotyrosine; by FYN.

It belongs to the immunoglobulin superfamily. In terms of assembly, interacts with NPHS2 and with CD2AP (via C-terminal domain). Self-associates (via the Ig-like domains). Also interacts (via the Ig-like domains) with KIRREL1/NEPH1 and KIRREL2; the interaction with KIRREL1 is dependent on KIRREL1 glycosylation. Interacts with KIRREL3. Interacts with MAGI1 (via PDZ 2 and 3 domains) forming a tripartite complex with IGSF5/JAM4. Interacts with DDN; the interaction is direct. Forms a complex with ACTN4, CASK, IQGAP1, MAGI2, SPTAN1 and SPTBN1. Interacts with phosphatidylinositol 3-kinase regulatory subunit PIK3R1; the interaction is reduced by high glucose levels. Phosphorylated at Tyr-1204 by FYN, leading to the recruitment and activation of phospholipase C-gamma-1/PLCG1. Tyrosine phosphorylation is reduced by high glucose levels. Dephosphorylated by tensin TNS2 which leads to reduced binding of NPHN1 to PIK3R1. Strongly expressed in the podocytes of kidney glomeruli (at protein level) and at lower levels in the spleen.

It is found in the cell membrane. Functionally, seems to play a role in the development or function of the kidney glomerular filtration barrier. Regulates glomerular vascular permeability. May anchor the podocyte slit diaphragm to the actin cytoskeleton. Plays a role in skeletal muscle formation through regulation of myoblast fusion. This Rattus norvegicus (Rat) protein is Nephrin (Nphs1).